The primary structure comprises 108 residues: MWVMVVTLAPIEPKVRPNTTWQHESAPVDITAARWVTIVWDDPVNLMAYVTYVFQKLFGYSEPHATKLMLQVHNEGKAVVSMGSRESMEVDVSKLHAAGLWATMQQDR.

The protein belongs to the ClpS family. As to quaternary structure, binds to the N-terminal domain of the chaperone ClpA.

Its function is as follows. Involved in the modulation of the specificity of the ClpAP-mediated ATP-dependent protein degradation. This Mycobacterium leprae (strain TN) protein is ATP-dependent Clp protease adapter protein ClpS.